The sequence spans 864 residues: DNA mismatch repair protein MutS (864 aa).

Residue 607 to 614 (GPNMGGKS) participates in ATP binding.

The protein belongs to the DNA mismatch repair MutS family.

In terms of biological role, this protein is involved in the repair of mismatches in DNA. It is possible that it carries out the mismatch recognition step. This protein has a weak ATPase activity. The protein is DNA mismatch repair protein MutS of Neisseria meningitidis serogroup C / serotype 2a (strain ATCC 700532 / DSM 15464 / FAM18).